The sequence spans 211 residues: MFAEFGVLNFWTYVVGAFFIVLVPGPNTLFVLKTGIGHGVKKGYLAATGVFIGDAVLMFLAWAGVAALIQTTPVLFNIVRYLGALYLLWLGGKMLWSVIMRKNSAHAGGAEPSSTILKRSLVLSLTNPKAILFYVSFFVQFIDVSATNTGTSFLILATTLELISFMYMSFLIFSGAFVTRYLKTKKKLAKLGNGLIGLLFVGFAARLASLH.

6 helical membrane passes run 5–25, 49–69, 72–92, 122–142, 153–173, and 191–211; these read FGVL…LVPG, GVFI…AALI, TPVL…WLGG, VLSL…VQFI, FLIL…FLIF, and LGNG…ASLH.

The protein belongs to the Rht family.

It is found in the cell inner membrane. The enzyme catalyses L-leucine(in) + H(+)(out) = L-leucine(out) + H(+)(in). Exporter of leucine. This is Leucine efflux protein (leuE) from Enterobacter sp. (strain 638).